Reading from the N-terminus, the 296-residue chain is Coatomer subunit epsilon (296 aa).

The protein belongs to the COPE family. In terms of assembly, oligomeric complex that consists of at least the alpha, beta, beta', gamma, delta, epsilon and zeta subunits. Interacts with the ESCRT-0 subunit VPS27.

The protein localises to the cytoplasm. It localises to the golgi apparatus membrane. It is found in the cytoplasmic vesicle. Its subcellular location is the COPI-coated vesicle membrane. In terms of biological role, the coatomer is a cytosolic protein complex that binds to dilysine motifs and reversibly associates with Golgi non-clathrin-coated vesicles, which further mediate biosynthetic protein transport from the ER, via the Golgi up to the trans Golgi network. The coatomer complex is required for budding from Golgi membranes, and is essential for the retrograde Golgi-to-ER transport of dilysine-tagged proteins. The polypeptide is Coatomer subunit epsilon (SEC28) (Saccharomyces cerevisiae (strain ATCC 204508 / S288c) (Baker's yeast)).